The following is a 169-amino-acid chain: Ribosome maturation factor RimM (169 aa).

The region spanning 94-168 (DDEFYHADLI…RIVADPPEGL (75 aa)) is the PRC barrel domain.

It belongs to the RimM family. Binds ribosomal protein uS19.

The protein resides in the cytoplasm. Functionally, an accessory protein needed during the final step in the assembly of 30S ribosomal subunit, possibly for assembly of the head region. Essential for efficient processing of 16S rRNA. May be needed both before and after RbfA during the maturation of 16S rRNA. It has affinity for free ribosomal 30S subunits but not for 70S ribosomes. This is Ribosome maturation factor RimM from Cereibacter sphaeroides (strain ATCC 17023 / DSM 158 / JCM 6121 / CCUG 31486 / LMG 2827 / NBRC 12203 / NCIMB 8253 / ATH 2.4.1.) (Rhodobacter sphaeroides).